Consider the following 384-residue polypeptide: 5-amino-6-(D-ribitylamino)uracil--L-tyrosine 4-hydroxyphenyl transferase 2 (384 aa).

Positions 53–286 (VSYVVNRNIY…IAISRIILHT (234 aa)) constitute a Radical SAM core domain. 3 residues coordinate [4Fe-4S] cluster: C67, C71, and C74.

Belongs to the radical SAM superfamily. CofH family. Consists of two subunits, CofG and CofH. The cofactor is [4Fe-4S] cluster.

It carries out the reaction 5-amino-6-(D-ribitylamino)uracil + L-tyrosine + S-adenosyl-L-methionine = 5-amino-5-(4-hydroxybenzyl)-6-(D-ribitylimino)-5,6-dihydrouracil + 2-iminoacetate + 5'-deoxyadenosine + L-methionine + H(+). It participates in cofactor biosynthesis; coenzyme F0 biosynthesis. Its function is as follows. Catalyzes the radical-mediated synthesis of 5-amino-5-(4-hydroxybenzyl)-6-(D-ribitylimino)-5,6-dihydrouracil from 5-amino-6-(D-ribitylamino)uracil and L-tyrosine. The sequence is that of 5-amino-6-(D-ribitylamino)uracil--L-tyrosine 4-hydroxyphenyl transferase 2 from Methanosarcina acetivorans (strain ATCC 35395 / DSM 2834 / JCM 12185 / C2A).